A 352-amino-acid chain; its full sequence is Biotin synthase (352 aa).

Residues 44–262 (NRVQVSTLLS…LAVARILMPK (219 aa)) form the Radical SAM core domain. Residues Cys59, Cys63, and Cys66 each coordinate [4Fe-4S] cluster. Cys103, Cys134, Cys194, and Arg266 together coordinate [2Fe-2S] cluster.

The protein belongs to the radical SAM superfamily. Biotin synthase family. In terms of assembly, homodimer. [4Fe-4S] cluster serves as cofactor. It depends on [2Fe-2S] cluster as a cofactor.

It catalyses the reaction (4R,5S)-dethiobiotin + (sulfur carrier)-SH + 2 reduced [2Fe-2S]-[ferredoxin] + 2 S-adenosyl-L-methionine = (sulfur carrier)-H + biotin + 2 5'-deoxyadenosine + 2 L-methionine + 2 oxidized [2Fe-2S]-[ferredoxin]. Its pathway is cofactor biosynthesis; biotin biosynthesis; biotin from 7,8-diaminononanoate: step 2/2. Its function is as follows. Catalyzes the conversion of dethiobiotin (DTB) to biotin by the insertion of a sulfur atom into dethiobiotin via a radical-based mechanism. This chain is Biotin synthase, found in Pseudomonas putida (strain ATCC 47054 / DSM 6125 / CFBP 8728 / NCIMB 11950 / KT2440).